Reading from the N-terminus, the 756-residue chain is Serine/threonine-protein kinase DCLK1 (756 aa).

2 positions are modified to phosphoserine: Ser32 and Ser36. Position 46 is a phosphothreonine (Thr46). Doublecortin domains follow at residues 57–143 and 186–269; these read KKVR…LEYT and KLVT…QDDF. Positions 288–393 are disordered; that stretch reads ASASRRGTTK…QRGWRREESE (106 aa). Residues 297–313 are compositionally biased toward low complexity; that stretch reads KSPGPSRRSKSPASTSS. Phosphoserine is present on residues Ser305, Ser307, Ser330, Ser332, Ser334, Ser337, Ser347, Ser352, Ser353, Ser355, Ser358, Cys362, and Ser364. Residues 347–364 are compositionally biased toward low complexity; the sequence is SQHGGSSTSLSSTKVCSS. Acidic residues predominate over residues 366-375; it reads DENDGPGEGD. The residue at position 392 (Ser392) is a Phosphoserine. Residues 406–663 form the Protein kinase domain; sequence YKVGRTIGDG…AVQVLEHPWV (258 aa). ATP contacts are provided by residues 412 to 420 and Lys435; that span reads IGDGNFAVV. Residue Asp527 is the Proton acceptor of the active site. Phosphotyrosine is present on Tyr536. Residues 711–723 show a composition bias toward basic and acidic residues; the sequence is QVFRRRRNQDVRS. Positions 711-756 are disordered; it reads QVFRRRRNQDVRSRYKAQPAPPELNSESEDYSPSSSETVRSPNSPF. A phosphoserine mark is found at Ser742, Ser751, and Ser754.

The protein belongs to the protein kinase superfamily. CAMK Ser/Thr protein kinase family. CaMK subfamily.

It catalyses the reaction L-seryl-[protein] + ATP = O-phospho-L-seryl-[protein] + ADP + H(+). The catalysed reaction is L-threonyl-[protein] + ATP = O-phospho-L-threonyl-[protein] + ADP + H(+). Functionally, probable kinase that may be involved in a calcium-signaling pathway controlling neuronal migration in the developing brain. May also participate in functions of the mature nervous system. The protein is Serine/threonine-protein kinase DCLK1 (Dclk1) of Mus musculus (Mouse).